Here is a 266-residue protein sequence, read N- to C-terminus: Large ribosomal subunit protein uL4 (266 aa).

It belongs to the universal ribosomal protein uL4 family. In terms of assembly, part of the 50S ribosomal subunit.

In terms of biological role, one of the primary rRNA binding proteins, this protein initially binds near the 5'-end of the 23S rRNA. It is important during the early stages of 50S assembly. It makes multiple contacts with different domains of the 23S rRNA in the assembled 50S subunit and ribosome. Functionally, forms part of the polypeptide exit tunnel. The chain is Large ribosomal subunit protein uL4 from Sulfolobus acidocaldarius (strain ATCC 33909 / DSM 639 / JCM 8929 / NBRC 15157 / NCIMB 11770).